A 484-amino-acid polypeptide reads, in one-letter code: MTETKTLKNFIGGQWVASTSGKEEVVPNPATGEVLAKVPLSSREELDAAVAAAKEAFREWRKVPVPRRARILFRYQQLLVEHWDELARLVTLENGKVYEDAYGEVQRGIECVEFAAGIPTLMMGQQLPDIATDIESGMYRYPLGVVAGITPFNFPMMVPCWMFPLAIACGNTFVLKPSERTPMLANRLAELFTEAGLPPGVLNIVHGAHEVVGGILEHKDIKAVSFVGSQPVAEYVYKTAAAHGKRVQALAGAKNHSIVMPDADLDMAVTNIINAAFGSAGERCMACSVVVAVGDIADELVRRLKEAADRIQIGNGLDKGVFLGPVIRESHKERTIKYIEIGEKEGALLVRDGRRDSATSGQGYFIGPTIFDHVKPGMTIWTDEIFAPVLSVVRARDLDEAIEIANRSEFANGACIYTDSAKAIRQFREEIDAGMLGVNVAVPAPMAFFPFSGYKNSFYGDLHANGRDGVEFYTRKKMVTARYQ.

5 residues coordinate NAD(+): F152, K176, E179, R180, and S229. The Nucleophile role is filled by C284. An NAD(+)-binding site is contributed by E384.

It belongs to the aldehyde dehydrogenase family. IolA subfamily. Homotetramer.

The catalysed reaction is 3-oxopropanoate + NAD(+) + CoA + H2O = hydrogencarbonate + acetyl-CoA + NADH + H(+). The enzyme catalyses 2-methyl-3-oxopropanoate + NAD(+) + CoA + H2O = propanoyl-CoA + hydrogencarbonate + NADH + H(+). Its pathway is polyol metabolism; myo-inositol degradation into acetyl-CoA; acetyl-CoA from myo-inositol: step 7/7. Its function is as follows. Catalyzes the oxidation of malonate semialdehyde (MSA) and methylmalonate semialdehyde (MMSA) into acetyl-CoA and propanoyl-CoA, respectively. Is involved in a myo-inositol catabolic pathway. Bicarbonate, and not CO2, is the end-product of the enzymatic reaction. This Geobacillus kaustophilus (strain HTA426) protein is Malonate-semialdehyde dehydrogenase 3.